A 339-amino-acid chain; its full sequence is DNA-directed RNA polymerase subunit alpha (339 aa).

Residues Met-1 to Glu-235 are alpha N-terminal domain (alpha-NTD). The segment at Phe-251 to Tyr-339 is alpha C-terminal domain (alpha-CTD).

This sequence belongs to the RNA polymerase alpha chain family. As to quaternary structure, homodimer. The RNAP catalytic core consists of 2 alpha, 1 beta, 1 beta' and 1 omega subunit. When a sigma factor is associated with the core the holoenzyme is formed, which can initiate transcription.

It catalyses the reaction RNA(n) + a ribonucleoside 5'-triphosphate = RNA(n+1) + diphosphate. Functionally, DNA-dependent RNA polymerase catalyzes the transcription of DNA into RNA using the four ribonucleoside triphosphates as substrates. The polypeptide is DNA-directed RNA polymerase subunit alpha (Afipia carboxidovorans (strain ATCC 49405 / DSM 1227 / KCTC 32145 / OM5) (Oligotropha carboxidovorans)).